We begin with the raw amino-acid sequence, 173 residues long: Copper transport protein ctr5 (173 aa).

The Extracellular segment spans residues 1 to 54; the sequence is MSLSKMSMSGMSGMGMGSSSNSSAATCRMSMLWNWYIHDSCFLAKSWHINTGNK. Residues 55-75 form a helical membrane-spanning segment; sequence FAGSIIGIFFFAVAIEGLSLV. The Cytoplasmic portion of the chain corresponds to 76–135; it reads QRMFDRWIVAHSNGKTLSGPLRIFFPSSTVHVTVWQQLIRAAMYSSFYLSATILMLIVMS. A helical transmembrane segment spans residues 136–156; it reads FNGYAILFGFVGAWIGFFLFA. At 157–173 the chain is on the extracellular side; the sequence is SDTYGTPSTGTGCCESR.

This sequence belongs to the copper transporter (Ctr) (TC 1.A.56) family. SLC31A subfamily. As to quaternary structure, interacts with ctr4.

The protein resides in the membrane. Required for high affinity copper (probably reduced Cu I) transport into the cell. This chain is Copper transport protein ctr5 (ctr5), found in Schizosaccharomyces pombe (strain 972 / ATCC 24843) (Fission yeast).